An 80-amino-acid chain; its full sequence is Exodeoxyribonuclease 7 small subunit (80 aa).

This sequence belongs to the XseB family. Heterooligomer composed of large and small subunits.

Its subcellular location is the cytoplasm. It carries out the reaction Exonucleolytic cleavage in either 5'- to 3'- or 3'- to 5'-direction to yield nucleoside 5'-phosphates.. Its function is as follows. Bidirectionally degrades single-stranded DNA into large acid-insoluble oligonucleotides, which are then degraded further into small acid-soluble oligonucleotides. This chain is Exodeoxyribonuclease 7 small subunit, found in Oleidesulfovibrio alaskensis (strain ATCC BAA-1058 / DSM 17464 / G20) (Desulfovibrio alaskensis).